Reading from the N-terminus, the 467-residue chain is MAAAARARVAYLLRQLQRAACQCPTHSHTYSQAPGLSPSGKTTDYAFEMAVSNIRYGAAVTKEVGMDLKNMGAKNVCLMTDKNLSKLPPVQVAMDSLVKNGIPFTVYDNVRVEPTDSSFMEAIEFAQKGAFDAYVAVGGGSTMDTCKAANLYASSPHSDFLDYVSAPIGKGKPVSVPLKPLIAVPTTSGTGSETTGVAIFDYEHLKVKIGITSRAIKPTLGLIDPLHTLHMPARVVANSGFDVLCHALESYTTLPYHLRSPCPSNPITRPAYQGSNPISDIWAIHALRIVAKYLKRAVRNPDDLEARSHMHLASAFAGIGFGNAGVHLCHGMSYPISGLVKMYKAKDYNVDHPLVPHGLSVVLTSPAVFTFTAQMFPERHLEMAEILGADTRTARIQDAGLVLADTLRKFLFDLDVDDGLAAVGYSKADIPALVKGTLPQERVTKLAPCPQSEEDLAALFEASMKLY.

Lys-445 bears the N6-acetyllysine mark. Ser-452 carries the phosphoserine modification.

It belongs to the iron-containing alcohol dehydrogenase family. Hydroxyacid-oxoacid transhydrogenase subfamily. In terms of tissue distribution, only expressed in adult liver.

The protein resides in the mitochondrion. It carries out the reaction (S)-3-hydroxybutanoate + 2-oxoglutarate = (R)-2-hydroxyglutarate + acetoacetate. It catalyses the reaction 4-hydroxybutanoate + 2-oxoglutarate = (R)-2-hydroxyglutarate + succinate semialdehyde. Functionally, catalyzes the cofactor-independent reversible oxidation of gamma-hydroxybutyrate (GHB) to succinic semialdehyde (SSA) coupled to reduction of 2-ketoglutarate (2-KG) to D-2-hydroxyglutarate (D-2-HG). D,L-3-hydroxyisobutyrate and L-3-hydroxybutyrate (L-3-OHB) are also substrates for HOT with 10-fold lower activities. The protein is Hydroxyacid-oxoacid transhydrogenase, mitochondrial (ADHFE1) of Homo sapiens (Human).